A 105-amino-acid polypeptide reads, in one-letter code: Large ribosomal subunit protein uL24 (105 aa).

It belongs to the universal ribosomal protein uL24 family. Part of the 50S ribosomal subunit.

Its function is as follows. One of two assembly initiator proteins, it binds directly to the 5'-end of the 23S rRNA, where it nucleates assembly of the 50S subunit. Functionally, one of the proteins that surrounds the polypeptide exit tunnel on the outside of the subunit. In Methylobacillus flagellatus (strain ATCC 51484 / DSM 6875 / VKM B-1610 / KT), this protein is Large ribosomal subunit protein uL24.